We begin with the raw amino-acid sequence, 72 residues long: Large ribosomal subunit protein bL31 (72 aa).

Zn(2+)-binding residues include Cys-16, Cys-18, Cys-37, and Cys-40.

This sequence belongs to the bacterial ribosomal protein bL31 family. Type A subfamily. Part of the 50S ribosomal subunit. Zn(2+) is required as a cofactor.

Its function is as follows. Binds the 23S rRNA. The polypeptide is Large ribosomal subunit protein bL31 (Buchnera aphidicola subsp. Schizaphis graminum (strain Sg)).